Consider the following 170-residue polypeptide: Der GTPase-activating protein YihI (170 aa).

Disordered regions lie at residues 1–96 and 145–170; these read MKKP…LSPQ and LSYD…RGGN. The segment covering 20-30 has biased composition (basic and acidic residues); that stretch reads TREELNQEARD. Residues 31–40 show a composition bias toward basic residues; that stretch reads RKRLKKHRGH. The span at 147–159 shows a compositional bias: acidic residues; the sequence is YDDEEDEEEDEKQ.

It belongs to the YihI family. In terms of assembly, interacts with Der.

Its function is as follows. A GTPase-activating protein (GAP) that modifies Der/EngA GTPase function. May play a role in ribosome biogenesis. This chain is Der GTPase-activating protein YihI, found in Salmonella arizonae (strain ATCC BAA-731 / CDC346-86 / RSK2980).